Here is a 433-residue protein sequence, read N- to C-terminus: UDP-N-acetylglucosamine 1-carboxyvinyltransferase 2 (433 aa).

Position 23 to 24 (23 to 24 (KN)) interacts with phosphoenolpyruvate. A UDP-N-acetyl-alpha-D-glucosamine-binding site is contributed by R96. The active-site Proton donor is the C120. At C120 the chain carries 2-(S-cysteinyl)pyruvic acid O-phosphothioketal. UDP-N-acetyl-alpha-D-glucosamine is bound by residues 125–129 (RPIDL), D308, and V330.

This sequence belongs to the EPSP synthase family. MurA subfamily.

It localises to the cytoplasm. It carries out the reaction phosphoenolpyruvate + UDP-N-acetyl-alpha-D-glucosamine = UDP-N-acetyl-3-O-(1-carboxyvinyl)-alpha-D-glucosamine + phosphate. It functions in the pathway cell wall biogenesis; peptidoglycan biosynthesis. Its function is as follows. Cell wall formation. Adds enolpyruvyl to UDP-N-acetylglucosamine. The protein is UDP-N-acetylglucosamine 1-carboxyvinyltransferase 2 of Enterococcus faecalis (strain ATCC 700802 / V583).